Reading from the N-terminus, the 24-residue chain is KDALEHTGFAPKKDGEEHVEWNYN.

Residues 1–24 (KDALEHTGFAPKKDGEEHVEWNYN) are disordered.

Post-translationally, glycosylated. Nacreous and prismatic layers of the shell.

Its function is as follows. Calcium-binding. This is Calcium-binding shell glycoprotein P50 from Unio pictorum (Painter's mussel).